Reading from the N-terminus, the 678-residue chain is Pescadillo homolog (678 aa).

Over residues 283-303 (EEEEPEEVDSEAGDEDDDDLP) the composition is skewed to acidic residues. The tract at residues 283–316 (EEEEPEEVDSEAGDEDDDDLPVLDSGTRRRRAAA) is disordered. One can recognise a BRCT domain in the interval 361 to 451 (VCGSLFRGRV…VLMPTDLYAP (91 aa)). Residues 552–587 (MTRKARKMYNNMKQKEAAKQERVQQLESKKAKLAAT) are a coiled coil. The tract at residues 563–678 (MKQKEAAKQE…DAAPAKRQRR (116 aa)) is disordered. Basic and acidic residues predominate over residues 564-581 (KQKEAAKQERVQQLESKK). Composition is skewed to low complexity over residues 597–618 (KPAAAGKAAAAKAAAPAKVAAS) and 630–661 (APAPAKGKGTPAAKGKEAPAPAKGKGAAAAKE). The span at 662 to 672 (APAKGGKDAAP) shows a compositional bias: basic and acidic residues.

The protein belongs to the pescadillo family.

The protein resides in the nucleus. It localises to the nucleolus. The protein localises to the nucleoplasm. Its function is as follows. Required for maturation of ribosomal RNAs and formation of the large ribosomal subunit. This chain is Pescadillo homolog, found in Chlamydomonas reinhardtii (Chlamydomonas smithii).